A 295-amino-acid polypeptide reads, in one-letter code: GTPase Era (295 aa).

Residues 4 to 171 (KSGFVTIIGR…INLIVQYLPE (168 aa)) form the Era-type G domain. Residues 12 to 19 (GRPNVGKS) are G1. 12–19 (GRPNVGKS) serves as a coordination point for GTP. The G2 stretch occupies residues 38-42 (QTTRN). Residues 59–62 (DTPG) form a G3 region. Residues 59 to 63 (DTPGI) and 121 to 124 (NKID) contribute to the GTP site. The segment at 121-124 (NKID) is G4. The G5 stretch occupies residues 150–152 (ISA). A KH type-2 domain is found at 194-280 (IREKILHYTD…YLELWVKVKE (87 aa)).

The protein belongs to the TRAFAC class TrmE-Era-EngA-EngB-Septin-like GTPase superfamily. Era GTPase family. Monomer.

The protein resides in the cytoplasm. Its subcellular location is the cell membrane. An essential GTPase that binds both GDP and GTP, with rapid nucleotide exchange. Plays a role in 16S rRNA processing and 30S ribosomal subunit biogenesis and possibly also in cell cycle regulation and energy metabolism. In Alkaliphilus oremlandii (strain OhILAs) (Clostridium oremlandii (strain OhILAs)), this protein is GTPase Era.